Here is a 461-residue protein sequence, read N- to C-terminus: Argininosuccinate lyase (461 aa).

It belongs to the lyase 1 family. Argininosuccinate lyase subfamily.

The protein localises to the cytoplasm. It carries out the reaction 2-(N(omega)-L-arginino)succinate = fumarate + L-arginine. Its pathway is amino-acid biosynthesis; L-arginine biosynthesis; L-arginine from L-ornithine and carbamoyl phosphate: step 3/3. This Nitrosomonas eutropha (strain DSM 101675 / C91 / Nm57) protein is Argininosuccinate lyase.